Here is a 339-residue protein sequence, read N- to C-terminus: Dihydroorotase (339 aa).

Residues His-12 and His-14 each contribute to the Zn(2+) site. Substrate contacts are provided by residues 14–16 (HVR) and Asn-40. Positions 94, 133, 167, and 239 each coordinate Zn(2+). Lys-94 carries the N6-carboxylysine modification. His-133 serves as a coordination point for substrate. Asp-239 is a catalytic residue. 2 residues coordinate substrate: His-243 and Ala-255.

The protein belongs to the metallo-dependent hydrolases superfamily. DHOase family. Class II DHOase subfamily. Homodimer. It depends on Zn(2+) as a cofactor.

The catalysed reaction is (S)-dihydroorotate + H2O = N-carbamoyl-L-aspartate + H(+). The protein operates within pyrimidine metabolism; UMP biosynthesis via de novo pathway; (S)-dihydroorotate from bicarbonate: step 3/3. Functionally, catalyzes the reversible cyclization of carbamoyl aspartate to dihydroorotate. This Helicobacter acinonychis (strain Sheeba) protein is Dihydroorotase.